Reading from the N-terminus, the 143-residue chain is AP-2 complex subunit sigma (143 aa).

Belongs to the adaptor complexes small subunit family. As to quaternary structure, adaptor protein complex 2 (AP-2) is a heterotetramer composed of two large adaptins (alpha-type subunit apl3 and beta-type subunit apl1), a medium chain (mu-type subunit apm4) and a small adaptin (sigma-type subunit aps2).

The protein localises to the cell membrane. The protein resides in the membrane. It is found in the coated pit. In terms of biological role, component of the adaptor complexes which link clathrin to receptors in coated vesicles. Clathrin-associated protein complexes are believed to interact with the cytoplasmic tails of membrane proteins, leading to their selection and concentration. The sequence is that of AP-2 complex subunit sigma (aps2) from Schizosaccharomyces pombe (strain 972 / ATCC 24843) (Fission yeast).